Consider the following 581-residue polypeptide: Putative carboxypeptidase YOL153C (581 aa).

Residues 1–29 lie on the Cytoplasmic side of the membrane; it reads MTETHHAPLPDVYPSSKQPTSSTYSKCKK. A Glycyl lysine isopeptide (Lys-Gly) (interchain with G-Cter in ubiquitin) cross-link involves residue K17. A helical; Signal-anchor for type II membrane protein membrane pass occupies residues 30–46; sequence FGLPLIGLLTLLLAYIS. Over 47 to 581 the chain is Extracellular; the sequence is SFTKPVPNST…IVNVNEYGHD (535 aa). Residues N54 and N76 are each glycosylated (N-linked (GlcNAc...) asparagine). H170 provides a ligand contact to Zn(2+). The active site involves D172. D207 is a binding site for Zn(2+). Residue E241 is the Proton acceptor of the active site. Zn(2+)-binding residues include E242 and D270. N-linked (GlcNAc...) asparagine glycans are attached at residues N335 and N428. Residue H550 coordinates Zn(2+).

The protein belongs to the peptidase M20A family. Zn(2+) serves as cofactor.

It is found in the membrane. The polypeptide is Putative carboxypeptidase YOL153C (Saccharomyces cerevisiae (strain ATCC 204508 / S288c) (Baker's yeast)).